We begin with the raw amino-acid sequence, 301 residues long: Single-stranded DNA-binding protein (301 aa).

The segment at 3–7 (KRKST) is LAST. Positions 64, 77, 87, and 90 each coordinate Zn(2+). Residues 272–301 (TKTEDDFMSSSSGSSSSADDTDLDDLLNDL) form a disordered region. The span at 279–289 (MSSSSGSSSSA) shows a compositional bias: low complexity. Residues 290–301 (DDTDLDDLLNDL) show a composition bias toward acidic residues.

Belongs to the Tequatrovirus single-stranded DNA-binding protein family. In terms of assembly, homodimer in the absence of DNA, monomer when binding DNA. Interacts with the DNA helicase assembly protein; a ternary complex between the helicase assembly protein, the single-stranded DNA-binding protein and ssDNA is an obligatory intermediate in the helicase loading mechanism. Part of the replicase complex that includes the DNA polymerase, the polymerase clamp, the clamp loader complex, the single-stranded DNA binding protein, the primase, the DnaB-like SF4 replicative helicase and the helicase assembly factor. Interacts (via C-terminus) with the viral SF1 dDA helicase. Interacts with the viral SF2 UvsW repair helicase.

Its function is as follows. Single-stranded DNA-binding protein that participates in viral DNA replication, recombination, and repair. Coats the lagging-strand ssDNA as the replication fork advances. Stimulates the activities of viral DNA polymerase and DnaB-like SF4 replicative helicase, probably via its interaction with the helicase assembly factor. Stimulates the unwinding activity of UvsW helicase, inhibits it DNA winding activity. Together with DnaB-like SF4 replicative helicase and the helicase assembly factor, promotes pairing of two homologous DNA molecules containing complementary single-stranded regions and mediates homologous DNA strand exchange. Also promotes the formation of joint molecules. mRNA specific autogenous translational repressor. In Escherichia coli (Bacteriophage T4), this protein is Single-stranded DNA-binding protein.